Here is a 177-residue protein sequence, read N- to C-terminus: Shikimate kinase (177 aa).

14 to 19 contacts ATP; sequence GSGKST. S18 contributes to the Mg(2+) binding site. Residues D36, R60, and G82 each coordinate substrate. R120 is an ATP binding site. R139 provides a ligand contact to substrate.

This sequence belongs to the shikimate kinase family. As to quaternary structure, monomer. Mg(2+) serves as cofactor.

The protein localises to the cytoplasm. The enzyme catalyses shikimate + ATP = 3-phosphoshikimate + ADP + H(+). It participates in metabolic intermediate biosynthesis; chorismate biosynthesis; chorismate from D-erythrose 4-phosphate and phosphoenolpyruvate: step 5/7. Functionally, catalyzes the specific phosphorylation of the 3-hydroxyl group of shikimic acid using ATP as a cosubstrate. In Gloeobacter violaceus (strain ATCC 29082 / PCC 7421), this protein is Shikimate kinase.